The primary structure comprises 115 residues: Large ribosomal subunit protein uL18 (115 aa).

Belongs to the universal ribosomal protein uL18 family. As to quaternary structure, part of the 50S ribosomal subunit; part of the 5S rRNA/L5/L18/L25 subcomplex. Contacts the 5S and 23S rRNAs.

Its function is as follows. This is one of the proteins that bind and probably mediate the attachment of the 5S RNA into the large ribosomal subunit, where it forms part of the central protuberance. In Mycoplasma genitalium (strain ATCC 33530 / DSM 19775 / NCTC 10195 / G37) (Mycoplasmoides genitalium), this protein is Large ribosomal subunit protein uL18.